Consider the following 281-residue polypeptide: Bifunctional protein FolD (281 aa).

Residues 165–167 (GRS) and Ser190 each bind NADP(+).

This sequence belongs to the tetrahydrofolate dehydrogenase/cyclohydrolase family. As to quaternary structure, homodimer.

The enzyme catalyses (6R)-5,10-methylene-5,6,7,8-tetrahydrofolate + NADP(+) = (6R)-5,10-methenyltetrahydrofolate + NADPH. The catalysed reaction is (6R)-5,10-methenyltetrahydrofolate + H2O = (6R)-10-formyltetrahydrofolate + H(+). The protein operates within one-carbon metabolism; tetrahydrofolate interconversion. In terms of biological role, catalyzes the oxidation of 5,10-methylenetetrahydrofolate to 5,10-methenyltetrahydrofolate and then the hydrolysis of 5,10-methenyltetrahydrofolate to 10-formyltetrahydrofolate. The sequence is that of Bifunctional protein FolD from Polaromonas sp. (strain JS666 / ATCC BAA-500).